The sequence spans 446 residues: MLAIAILAAGKGTRMKSKLPKVLHPLAGKSLIDRVLSCTHGLKPNRRLIVVGHQANLVEDSLRKHQDLDFVLQQPQNGTGHAIQQLKPRLKGFNGELLVLNGDVPLLKEETLSSLLKFHKESNASVTFLSASLDSPTGYGRVFTDESGLVKKIIEERDCTNEQRKNKLINAGIYCFNWQQLSDVLNLLSNQNSQNEIYLTDTISLLKKALHFEVDNPFEIKGINDRVQLSECEHYIQEELKSLWMSKGVSFVDPISCSLSEDSNFGTDVIIEPQTHLRGKCSIGNGCHLGPGSVITNSTLAENVLAIHSFINEATIGNNTSIGPFAHIRPESNIRQNSKIGNFVEIKKSCIGEGTKINHLSYVGDSALGKNINIGAGTITANFDGKNKHRTIIDDYSKTGANSVLVAPIKIGAHVTIGAGSTISKDIPDKSLVVERSKAIIRTKAD.

Residues 1-226 (MLAIAILAAG…PFEIKGINDR (226 aa)) form a pyrophosphorylase region. UDP-N-acetyl-alpha-D-glucosamine contacts are provided by residues 7-10 (LAAG), Lys-21, Gln-73, and 78-79 (GT). Asp-103 is a binding site for Mg(2+). Residues Gly-140, Glu-155, Asn-170, and Asn-224 each coordinate UDP-N-acetyl-alpha-D-glucosamine. Asn-224 lines the Mg(2+) pocket. The segment at 227-247 (VQLSECEHYIQEELKSLWMSK) is linker. Positions 248–446 (GVSFVDPISC…SKAIIRTKAD (199 aa)) are N-acetyltransferase. UDP-N-acetyl-alpha-D-glucosamine contacts are provided by Arg-329 and Lys-347. The active-site Proton acceptor is the His-359. Tyr-362 and Asn-373 together coordinate UDP-N-acetyl-alpha-D-glucosamine. Acetyl-CoA contacts are provided by Ala-376, Ala-419, and Arg-436.

This sequence in the N-terminal section; belongs to the N-acetylglucosamine-1-phosphate uridyltransferase family. In the C-terminal section; belongs to the transferase hexapeptide repeat family. Homotrimer. Mg(2+) serves as cofactor.

Its subcellular location is the cytoplasm. The enzyme catalyses alpha-D-glucosamine 1-phosphate + acetyl-CoA = N-acetyl-alpha-D-glucosamine 1-phosphate + CoA + H(+). It carries out the reaction N-acetyl-alpha-D-glucosamine 1-phosphate + UTP + H(+) = UDP-N-acetyl-alpha-D-glucosamine + diphosphate. The protein operates within nucleotide-sugar biosynthesis; UDP-N-acetyl-alpha-D-glucosamine biosynthesis; N-acetyl-alpha-D-glucosamine 1-phosphate from alpha-D-glucosamine 6-phosphate (route II): step 2/2. It functions in the pathway nucleotide-sugar biosynthesis; UDP-N-acetyl-alpha-D-glucosamine biosynthesis; UDP-N-acetyl-alpha-D-glucosamine from N-acetyl-alpha-D-glucosamine 1-phosphate: step 1/1. It participates in bacterial outer membrane biogenesis; LPS lipid A biosynthesis. In terms of biological role, catalyzes the last two sequential reactions in the de novo biosynthetic pathway for UDP-N-acetylglucosamine (UDP-GlcNAc). The C-terminal domain catalyzes the transfer of acetyl group from acetyl coenzyme A to glucosamine-1-phosphate (GlcN-1-P) to produce N-acetylglucosamine-1-phosphate (GlcNAc-1-P), which is converted into UDP-GlcNAc by the transfer of uridine 5-monophosphate (from uridine 5-triphosphate), a reaction catalyzed by the N-terminal domain. This Prochlorococcus marinus (strain NATL2A) protein is Bifunctional protein GlmU.